The following is a 264-amino-acid chain: Virulence plasmid protein pGP3-D (264 aa).

This is Virulence plasmid protein pGP3-D from Chlamydia muridarum (strain MoPn / Nigg).